Consider the following 623-residue polypeptide: MHRYRSHTCGALSTAQVGEIVRLSGWCHRIRDHGGVLFIDLRDHYGLTQVVVDPDSAAFKDAEKVRAEWVIRIDGKVRLRPEGTENPDLATGAVEVYATELEVLGPSAELPLPVFGDVEYPEETRLRYRFLDLRREKLHRNIMTRGAIIDAMRSRMKGQGFFEFQTPILTASSPEGARDFLVPSRLHPGKFYALPQAPQQYKQLIMMSGFDRYFQIAPCFRDEDPRADRLPGEFYQLDLEMSFVEQEDIFAAVEPVITGVFEQFAEGKPVTQKWPRIPYAESLRKYGTDKPDLRNPLVMQNVSEHFRGSGFKVFARMLEVEKNEVWAIPAPGGGSRAFCDRMNSWAQSEGQPGLGYIMWRDLSADAAAGGEKAVKDALEKSRGPGAGEGHVVEPGVVGAGPLANNIGPERTEAIRAQLDLKAGDAAFFVAGDPDKFVKFAGLARTRVGEELNLVDKDRFELAWIVDFPFYEYSEEEKKVDFSHNPFSMPQGGLDALNTQDPLSIKAFQYDIACNGYEIASGGIRNHRPEAMVKAFEIAGYDAQTVEERFGGMYRAFQYGAPPHGGMAAGVDRIVMLLCGVTNLREISLFPMNQQALDLLMGAPAEAAPKQLRELHIRPAPQAK.

Glutamate 175 is a binding site for L-aspartate. Positions 199 to 202 (QQYK) are aspartate. Arginine 221 and histidine 483 together coordinate L-aspartate. 221-223 (RDE) contributes to the ATP binding site. Glutamate 517 is a binding site for ATP. Arginine 524 contacts L-aspartate. 569 to 572 (GVDR) provides a ligand contact to ATP.

It belongs to the class-II aminoacyl-tRNA synthetase family. Type 1 subfamily. In terms of assembly, homodimer.

Its subcellular location is the cytoplasm. The enzyme catalyses tRNA(Asx) + L-aspartate + ATP = L-aspartyl-tRNA(Asx) + AMP + diphosphate. Its function is as follows. Aspartyl-tRNA synthetase with relaxed tRNA specificity since it is able to aspartylate not only its cognate tRNA(Asp) but also tRNA(Asn). Reaction proceeds in two steps: L-aspartate is first activated by ATP to form Asp-AMP and then transferred to the acceptor end of tRNA(Asp/Asn). This chain is Aspartate--tRNA(Asp/Asn) ligase, found in Xanthobacter autotrophicus (strain ATCC BAA-1158 / Py2).